The chain runs to 232 residues: Phosphatidylserine decarboxylase proenzyme (232 aa).

Catalysis depends on serine 190, which acts as the Schiff-base intermediate with substrate; via pyruvic acid. At serine 190 the chain carries Pyruvic acid (Ser); by autocatalysis.

Belongs to the phosphatidylserine decarboxylase family. PSD-A subfamily. Heterodimer of a large membrane-associated beta subunit and a small pyruvoyl-containing alpha subunit. It depends on pyruvate as a cofactor. Is synthesized initially as an inactive proenzyme. Formation of the active enzyme involves a self-maturation process in which the active site pyruvoyl group is generated from an internal serine residue via an autocatalytic post-translational modification. Two non-identical subunits are generated from the proenzyme in this reaction, and the pyruvate is formed at the N-terminus of the alpha chain, which is derived from the carboxyl end of the proenzyme. The post-translation cleavage follows an unusual pathway, termed non-hydrolytic serinolysis, in which the side chain hydroxyl group of the serine supplies its oxygen atom to form the C-terminus of the beta chain, while the remainder of the serine residue undergoes an oxidative deamination to produce ammonia and the pyruvoyl prosthetic group on the alpha chain.

It localises to the cell membrane. The enzyme catalyses a 1,2-diacyl-sn-glycero-3-phospho-L-serine + H(+) = a 1,2-diacyl-sn-glycero-3-phosphoethanolamine + CO2. It participates in phospholipid metabolism; phosphatidylethanolamine biosynthesis; phosphatidylethanolamine from CDP-diacylglycerol: step 2/2. In terms of biological role, catalyzes the formation of phosphatidylethanolamine (PtdEtn) from phosphatidylserine (PtdSer). The polypeptide is Phosphatidylserine decarboxylase proenzyme (Brucella abortus (strain S19)).